Consider the following 154-residue polypeptide: Ribosome maturation factor RimP (154 aa).

It belongs to the RimP family.

The protein localises to the cytoplasm. Required for maturation of 30S ribosomal subunits. This is Ribosome maturation factor RimP from Clostridium novyi (strain NT).